The following is a 968-amino-acid chain: Isoleucine--tRNA ligase (968 aa).

The 'HIGH' region motif lies at 68–78 (PYANGALHMGH). An L-isoleucyl-5'-AMP-binding site is contributed by Glu582. The 'KMSKS' region motif lies at 623–627 (KMSKS). Lys626 provides a ligand contact to ATP. Zn(2+)-binding residues include Cys936, Cys939, Cys956, and Cys959.

The protein belongs to the class-I aminoacyl-tRNA synthetase family. IleS type 1 subfamily. In terms of assembly, monomer. Zn(2+) is required as a cofactor.

The protein resides in the cytoplasm. The catalysed reaction is tRNA(Ile) + L-isoleucine + ATP = L-isoleucyl-tRNA(Ile) + AMP + diphosphate. Catalyzes the attachment of isoleucine to tRNA(Ile). As IleRS can inadvertently accommodate and process structurally similar amino acids such as valine, to avoid such errors it has two additional distinct tRNA(Ile)-dependent editing activities. One activity is designated as 'pretransfer' editing and involves the hydrolysis of activated Val-AMP. The other activity is designated 'posttransfer' editing and involves deacylation of mischarged Val-tRNA(Ile). This is Isoleucine--tRNA ligase from Prochlorococcus marinus (strain MIT 9301).